Consider the following 233-residue polypeptide: Ras-related protein RABA6a (233 aa).

Residue 20–27 (GDSAVGKS) participates in GTP binding. The short motif at 42 to 50 (SKPTIGVEF) is the Effector region element. Residues 68-72 (DTAGQ), 126-129 (NKSD), and 156-157 (SA) contribute to the GTP site. 2 S-geranylgeranyl cysteine lipidation sites follow: Cys-230 and Cys-231.

This sequence belongs to the small GTPase superfamily. Rab family.

The protein localises to the cell membrane. Functionally, intracellular vesicle trafficking and protein transport. This chain is Ras-related protein RABA6a (RABA6A), found in Arabidopsis thaliana (Mouse-ear cress).